A 151-amino-acid chain; its full sequence is Large ribosomal subunit protein bL9 (151 aa).

The protein belongs to the bacterial ribosomal protein bL9 family.

Binds to the 23S rRNA. The protein is Large ribosomal subunit protein bL9 of Chlorobium chlorochromatii (strain CaD3).